We begin with the raw amino-acid sequence, 451 residues long: Tubulin beta-1 chain (451 aa).

An MREI motif motif is present at residues 1 to 4; it reads MREI. Residues glutamine 11, glutamate 69, serine 138, glycine 142, threonine 143, and glycine 144 each coordinate GTP. Glutamate 69 lines the Mg(2+) pocket. The residue at position 172 (serine 172) is a Phosphoserine; by CDK1. Residues asparagine 204 and asparagine 226 each contribute to the GTP site. The tract at residues 432-451 is disordered; the sequence is LEEDEEVTEEAEMEPEDKGH. Residues 433–451 show a composition bias toward acidic residues; that stretch reads EEDEEVTEEAEMEPEDKGH. Glutamate 440 is subject to 5-glutamyl polyglutamate.

The protein belongs to the tubulin family. Dimer of alpha and beta chains. A typical microtubule is a hollow water-filled tube with an outer diameter of 25 nm and an inner diameter of 15 nM. Alpha-beta heterodimers associate head-to-tail to form protofilaments running lengthwise along the microtubule wall with the beta-tubulin subunit facing the microtubule plus end conferring a structural polarity. Microtubules usually have 13 protofilaments but different protofilament numbers can be found in some organisms and specialized cells. Interacts with RANBP10. The cofactor is Mg(2+). In terms of processing, some glutamate residues at the C-terminus are polyglutamylated, resulting in polyglutamate chains on the gamma-carboxyl group. Polyglutamylation plays a key role in microtubule severing by spastin (SPAST). SPAST preferentially recognizes and acts on microtubules decorated with short polyglutamate tails: severing activity by SPAST increases as the number of glutamates per tubulin rises from one to eight, but decreases beyond this glutamylation threshold. Glutamylation is also involved in cilia motility. Post-translationally, some glutamate residues at the C-terminus are monoglycylated but not polyglycylated due to the absence of functional TTLL10 in human. Monoglycylation is mainly limited to tubulin incorporated into cilia and flagella axonemes, which is required for their stability and maintenance. Flagella glycylation controls sperm motility. Both polyglutamylation and monoglycylation can coexist on the same protein on adjacent residues, and lowering glycylation levels increases polyglutamylation, and reciprocally. Phosphorylated on Ser-172 by CDK1 during the cell cycle, from metaphase to telophase, but not in interphase. This phosphorylation inhibits tubulin incorporation into microtubules. In terms of tissue distribution, hematopoietic cell-specific. Major isotype in leukocytes, where it represents 50% of all beta-tubulins.

It is found in the cytoplasm. The protein localises to the cytoskeleton. Functionally, tubulin is the major constituent of microtubules, a cylinder consisting of laterally associated linear protofilaments composed of alpha- and beta-tubulin heterodimers. Microtubules grow by the addition of GTP-tubulin dimers to the microtubule end, where a stabilizing cap forms. Below the cap, tubulin dimers are in GDP-bound state, owing to GTPase activity of alpha-tubulin. The chain is Tubulin beta-1 chain (TUBB1) from Homo sapiens (Human).